The following is a 151-amino-acid chain: UPF0178 protein YaiI (151 aa).

It belongs to the UPF0178 family.

The chain is UPF0178 protein YaiI from Salmonella arizonae (strain ATCC BAA-731 / CDC346-86 / RSK2980).